Reading from the N-terminus, the 979-residue chain is Putative disease resistance protein RGA1 (979 aa).

Positions 143 to 437 (GSVLTEPQVY…MAHGFLLSKG (295 aa)) constitute an NB-ARC domain. 182–189 (GMGGLGKT) is an ATP binding site. LRR repeat units lie at residues 524-547 (FVSLRVLNLRNSNLNQLPSSIGDL), 549-570 (HLRYLDLSGNFRIRNLPKRLCK), 571-594 (LQNLQTLDLHYCDSLSCLPKQTSK), 595-619 (LGSLRNLLLDGCSLTSTPPRIGLLT), 637-661 (LGELKNLNLYGSISITKLDRVKKDT), 748-773 (LPCLESLELHTGSADVEYVEDNVHPG), 823-841 (VKTLKVIVTDATVLRSISN), 842-866 (LRALTSLDISDNVEATSLPEEMFKS), 868-890 (ANLKYLKISFFRNLKELPTSLAS), 891-915 (LNALKSLKFEFCDALESLPEEGVKG), 917-939 (TSLTELSVSNCMMLKCLPEGLQH), and 940-965 (LTALTTLTITQCPIVFKRCERGIGED).

Belongs to the disease resistance NB-LRR family.

In terms of biological role, disease resistance protein. Resistance proteins guard the plant against pathogens that contain an appropriate avirulence protein via a direct or indirect interaction with this avirulence protein. That triggers a defense system which restricts the pathogen growth. The chain is Putative disease resistance protein RGA1 (RGA1) from Solanum bulbocastanum (Wild potato).